The sequence spans 275 residues: Glucan endo-1,3-beta-glucosidase, acidic isoform PR-N (275 aa).

The active-site Nucleophile is Glu196.

Belongs to the glycosyl hydrolase 17 family. The N-terminus is blocked.

The protein localises to the secreted. It is found in the extracellular space. The catalysed reaction is Hydrolysis of (1-&gt;3)-beta-D-glucosidic linkages in (1-&gt;3)-beta-D-glucans.. Its function is as follows. Implicated in the defense of plants against pathogens. In Nicotiana tabacum (Common tobacco), this protein is Glucan endo-1,3-beta-glucosidase, acidic isoform PR-N (PRN).